The primary structure comprises 225 residues: Redox-sensing transcriptional repressor Rex (225 aa).

A DNA-binding region (H-T-H motif) is located at residues 16–55; that stretch reads IYYRYLNILLDADKKRVSSTELSEAVKVDSATIRRDFSYF. NAD(+) is bound at residue 90–95; the sequence is GVGNLG.

The protein belongs to the transcriptional regulatory Rex family. In terms of assembly, homodimer.

The protein localises to the cytoplasm. Modulates transcription in response to changes in cellular NADH/NAD(+) redox state. The polypeptide is Redox-sensing transcriptional repressor Rex (Lactiplantibacillus plantarum (strain ATCC BAA-793 / NCIMB 8826 / WCFS1) (Lactobacillus plantarum)).